We begin with the raw amino-acid sequence, 265 residues long: Glutamate racemase (265 aa).

Residues 12-13 (DS) and 44-45 (YG) each bind substrate. The Proton donor/acceptor role is filled by Cys75. 76-77 (NT) contributes to the substrate binding site. Catalysis depends on Cys186, which acts as the Proton donor/acceptor. Substrate is bound at residue 187 to 188 (TH).

It belongs to the aspartate/glutamate racemases family.

The catalysed reaction is L-glutamate = D-glutamate. It functions in the pathway cell wall biogenesis; peptidoglycan biosynthesis. Its function is as follows. Provides the (R)-glutamate required for cell wall biosynthesis. The protein is Glutamate racemase of Pseudomonas entomophila (strain L48).